We begin with the raw amino-acid sequence, 470 residues long: Dihydrolipoyl dehydrogenase (470 aa).

FAD is bound by residues 39–47, K56, and A119; that span reads EKATLGGVC. C47 and C52 form a disulfide bridge. NAD(+) contacts are provided by residues 183–187, E206, and 272–275; these read GGGYI and TVGR. FAD contacts are provided by D315 and A323. The active-site Proton acceptor is the H447.

This sequence belongs to the class-I pyridine nucleotide-disulfide oxidoreductase family. Homodimer. Component of two multienzyme complexes: pyruvate dehydrogenase complex and oxoglutarate dehydrogenase complex. It depends on FAD as a cofactor.

The protein localises to the cytoplasm. It catalyses the reaction N(6)-[(R)-dihydrolipoyl]-L-lysyl-[protein] + NAD(+) = N(6)-[(R)-lipoyl]-L-lysyl-[protein] + NADH + H(+). In terms of biological role, catalyzes the oxidation of dihydrolipoamide to lipoamide. The sequence is that of Dihydrolipoyl dehydrogenase (pdhD) from Bacillus subtilis (strain 168).